Reading from the N-terminus, the 406-residue chain is Riboflavin biosynthesis protein RibBA (406 aa).

Positions 1 to 209 (MSEREEFKFN…IADLIKYRLR (209 aa)) are DHBP synthase. D-ribulose 5-phosphate is bound by residues 33–34 (RE), Asp-38, 148–152 (RAGHT), and Glu-172. Glu-34 provides a ligand contact to Mg(2+). Position 151 (His-151) interacts with Mg(2+). Positions 210 to 406 (RETLVEKVAS…VKKDKLGHMF (197 aa)) are GTP cyclohydrolase II. 260-264 (RVHSE) provides a ligand contact to GTP. Cys-265, Cys-276, and Cys-278 together coordinate Zn(2+). GTP is bound by residues Gln-281, 304–306 (EGR), and Thr-326. Residue Asp-338 is the Proton acceptor; for GTP cyclohydrolase activity of the active site. Arg-340 acts as the Nucleophile; for GTP cyclohydrolase activity in catalysis. 2 residues coordinate GTP: Thr-361 and Lys-366.

This sequence in the N-terminal section; belongs to the DHBP synthase family. It in the C-terminal section; belongs to the GTP cyclohydrolase II family. Requires Mg(2+) as cofactor. The cofactor is Mn(2+). Zn(2+) is required as a cofactor.

The catalysed reaction is D-ribulose 5-phosphate = (2S)-2-hydroxy-3-oxobutyl phosphate + formate + H(+). It carries out the reaction GTP + 4 H2O = 2,5-diamino-6-hydroxy-4-(5-phosphoribosylamino)-pyrimidine + formate + 2 phosphate + 3 H(+). It participates in cofactor biosynthesis; riboflavin biosynthesis; 2-hydroxy-3-oxobutyl phosphate from D-ribulose 5-phosphate: step 1/1. It functions in the pathway cofactor biosynthesis; riboflavin biosynthesis; 5-amino-6-(D-ribitylamino)uracil from GTP: step 1/4. In terms of biological role, catalyzes the conversion of D-ribulose 5-phosphate to formate and 3,4-dihydroxy-2-butanone 4-phosphate. Catalyzes the conversion of GTP to 2,5-diamino-6-ribosylamino-4(3H)-pyrimidinone 5'-phosphate (DARP), formate and pyrophosphate. The protein is Riboflavin biosynthesis protein RibBA of Aquifex aeolicus (strain VF5).